The primary structure comprises 173 residues: Superoxide dismutase [Cu-Zn] (173 aa).

The first 19 residues, 1–19, serve as a signal peptide directing secretion; that stretch reads MKRFSLAILALVVATGAQA. The Cu cation site is built by histidine 67, histidine 69, and histidine 92. The disordered stretch occupies residues 72 to 113; that stretch reads GSCQPATKDGKASAAESAGGHLDPQNTGKHEGPEGAGHLGDL. Cysteine 74 and cysteine 169 form a disulfide bridge. Positions 92, 101, 109, and 112 each coordinate Zn(2+). A Cu cation-binding site is contributed by histidine 147.

Belongs to the Cu-Zn superoxide dismutase family. Monomer. Cu cation serves as cofactor. Requires Zn(2+) as cofactor.

Its subcellular location is the periplasm. The catalysed reaction is 2 superoxide + 2 H(+) = H2O2 + O2. Functionally, destroys radicals which are normally produced within the cells and which are toxic to biological systems. The chain is Superoxide dismutase [Cu-Zn] (sodC) from Escherichia coli O157:H7.